Consider the following 231-residue polypeptide: Ribosomal RNA large subunit methyltransferase E (231 aa).

Gly76, Trp78, Asp99, Asp115, and Asp139 together coordinate S-adenosyl-L-methionine. Lys179 functions as the Proton acceptor in the catalytic mechanism.

It belongs to the class I-like SAM-binding methyltransferase superfamily. RNA methyltransferase RlmE family.

It localises to the cytoplasm. The catalysed reaction is uridine(2552) in 23S rRNA + S-adenosyl-L-methionine = 2'-O-methyluridine(2552) in 23S rRNA + S-adenosyl-L-homocysteine + H(+). Its function is as follows. Specifically methylates the uridine in position 2552 of 23S rRNA at the 2'-O position of the ribose in the fully assembled 50S ribosomal subunit. This chain is Ribosomal RNA large subunit methyltransferase E, found in Bradyrhizobium sp. (strain BTAi1 / ATCC BAA-1182).